A 554-amino-acid polypeptide reads, in one-letter code: MRATLATLAVLALATAVQSDSRARIVCYFSNWAVYRPGVGRYGIEDIPVEKCTHIIYSFIGVTEGNSEVLIIDPELDVDKNGFRNFTSLRSSHPSVKFMVAVGGWAEGSSKYSHMVAQKSTRMSFIRSVVSFLKKYDFDGLDLDWEYPGAADRGGSFSDKDKFLYLVQELRRAFIRVGKGWELTAAVPLANFRLMEGYHVPELCQELDAIHVMSYDLRGNWAGFADVHSPLYKRPHDQWAYEKLNVNDGLHLWEEKGCPSNKLVVGIPFYGRSFTLSAGNNNYGLGTFINKEAGGGDPAPYTNATGFWAYYEICTEVDKDDSGWTKKWDEQGKCPYAYKGTQWVGYEDPRSVEIKMNWIKQKGYLGAMTWAIDMDDFQGLCGEKNPLIKILHKHMSSYTVPPPHTENTTPTPEWARPPSTPSDPSEGDPIPTTTTAKPASTTKTTVKTTTTTTAKPPQSVIDEENDINVRPEPKPEPQPEPEVEVPPTENEVDGSEICNSDQDYIPDKKHCDKYWRCVNGEAMQFSCQHGTVFNVELNVCDWPSNATRRECQQP.

A signal peptide spans 1–19 (MRATLATLAVLALATAVQS). The GH18 domain maps to 23-398 (ARIVCYFSNW…KILHKHMSSY (376 aa)). The cysteines at positions 27 and 52 are disulfide-linked. Chitin is bound at residue 76 to 77 (LD). Residue N85 is glycosylated (N-linked (GlcNAc...) asparagine). 103–106 (GGWA) is a chitin binding site. The active-site Proton donor is the E146. Chitin is bound by residues Y147 and 213 to 216 (MSYD). An N-linked (GlcNAc...) asparagine glycan is attached at N303. Residue W370 coordinates chitin. Residues 398-494 (YTVPPPHTEN…VPPTENEVDG (97 aa)) are disordered. Over residues 431–457 (PTTTTAKPASTTKTTVKTTTTTTAKPP) the composition is skewed to low complexity. Over residues 467 to 477 (INVRPEPKPEP) the composition is skewed to basic and acidic residues. The 59-residue stretch at 495–553 (SEICNSDQDYIPDKKHCDKYWRCVNGEAMQFSCQHGTVFNVELNVCDWPSNATRRECQQ) folds into the Chitin-binding type-2 domain. A disulfide bond links C527 and C540. N545 carries N-linked (GlcNAc...) asparagine glycosylation.

The protein belongs to the glycosyl hydrolase 18 family. Chitinase class II subfamily. As to expression, epidermis and gut.

It localises to the secreted. It catalyses the reaction Random endo-hydrolysis of N-acetyl-beta-D-glucosaminide (1-&gt;4)-beta-linkages in chitin and chitodextrins.. Its function is as follows. Digests chitin in the exoskeleton during the molting process. The polypeptide is Endochitinase (Manduca sexta (Tobacco hawkmoth)).